A 402-amino-acid chain; its full sequence is CCA-adding enzyme (402 aa).

ATP contacts are provided by glycine 32 and arginine 35. Residues glycine 32 and arginine 35 each contribute to the CTP site. Mg(2+) is bound by residues aspartate 45 and aspartate 47. ATP is bound by residues arginine 119, aspartate 162, arginine 165, arginine 168, and arginine 171. The CTP site is built by arginine 119, aspartate 162, arginine 165, arginine 168, and arginine 171.

Belongs to the tRNA nucleotidyltransferase/poly(A) polymerase family. Bacterial CCA-adding enzyme type 3 subfamily. As to quaternary structure, homodimer. Mg(2+) serves as cofactor.

The catalysed reaction is a tRNA precursor + 2 CTP + ATP = a tRNA with a 3' CCA end + 3 diphosphate. The enzyme catalyses a tRNA with a 3' CCA end + 2 CTP + ATP = a tRNA with a 3' CCACCA end + 3 diphosphate. Functionally, catalyzes the addition and repair of the essential 3'-terminal CCA sequence in tRNAs without using a nucleic acid template. Adds these three nucleotides in the order of C, C, and A to the tRNA nucleotide-73, using CTP and ATP as substrates and producing inorganic pyrophosphate. tRNA 3'-terminal CCA addition is required both for tRNA processing and repair. Also involved in tRNA surveillance by mediating tandem CCA addition to generate a CCACCA at the 3' terminus of unstable tRNAs. While stable tRNAs receive only 3'-terminal CCA, unstable tRNAs are marked with CCACCA and rapidly degraded. The chain is CCA-adding enzyme from Lactococcus lactis subsp. cremoris (strain SK11).